The primary structure comprises 648 residues: Mitotic interactor and substrate of PLK1 (648 aa).

At Ser77 the chain carries Phosphoserine; by CDK1. Thr149 and Thr190 each carry phosphothreonine. Ser220 carries the post-translational modification Phosphoserine. 2 disordered regions span residues 242–383 and 430–460; these read VNDP…PEAR and KATE…GKAT. At Ser253 the chain carries Phosphoserine; by CDK1. Residues 255–281 are compositionally biased toward basic and acidic residues; that stretch reads ETPKETPIEREIRLAQEREAELREQRG. Residue Thr256 is modified to Phosphothreonine; by CDK1. Ser318 carries the post-translational modification Phosphoserine. Over residues 325-339 the composition is skewed to basic and acidic residues; that stretch reads MVQETQREEDHRREG. Thr347 is modified (phosphothreonine; by CDK1). Residues 349-367 show a composition bias toward polar residues; that stretch reads DWPSQDPQPGLQRSLSSDC. 2 positions are modified to phosphoserine: Ser352 and Ser364. 2 positions are modified to phosphoserine; by PLK1: Ser365 and Ser439. Polar residues predominate over residues 440–450; it reads ESSGRSLSSKQ. 2 positions are modified to phosphoserine: Ser507 and Ser509. Positions 511-534 form a coiled coil; that stretch reads DLLEREMESVLRREREVAEERRNA. Residues 539-568 are disordered; that stretch reads VFSPVPAEDESHEQDSRSSSRASGITGSYS. Position 541 is a phosphoserine; by CDK1 (Ser541). Ser554 is subject to Phosphoserine; by PLK1. A compositionally biased stretch (polar residues) spans 557–568; the sequence is SSRASGITGSYS. Phosphoserine is present on Ser644.

The protein belongs to the MISP family. Associates with F-actin. Interacts with DCTN1; this interaction regulates DCTN1 distribution at the cell cortex. Interacts with PTK2/FAK and MAPRE1. Phosphorylated by CDK1 and PLK1. CDK1 is the priming kinase for PLK1 phosphorylation. Phosphorylation by PLK1 is required for proper spindle orientation at metaphase.

It is found in the cell junction. The protein localises to the focal adhesion. The protein resides in the cytoplasm. It localises to the cytoskeleton. Its subcellular location is the cell cortex. Its function is as follows. Plays a role in mitotic spindle orientation and mitotic progression. Regulates the distribution of dynactin at the cell cortex in a PLK1-dependent manner, thus stabilizing cortical and astral microtubule attachments required for proper mitotic spindle positioning. May link microtubules to the actin cytoskeleton and focal adhesions. May be required for directed cell migration and centrosome orientation. May also be necessary for proper stacking of the Golgi apparatus. This chain is Mitotic interactor and substrate of PLK1, found in Mus musculus (Mouse).